We begin with the raw amino-acid sequence, 436 residues long: GTPase Der (436 aa).

EngA-type G domains are found at residues 4 to 167 (PTVA…PVEE) and 175 to 351 (IRFS…ESQN). GTP is bound by residues 10–17 (GRPNVGKS), 57–61 (DTGGI), 119–122 (NKVD), 181–188 (GRPNVGKS), 229–233 (DTAGM), and 294–297 (NKWD). Residues 352-436 (KRIPSAVLND…PIHLIARKRK (85 aa)) enclose the KH-like domain.

This sequence belongs to the TRAFAC class TrmE-Era-EngA-EngB-Septin-like GTPase superfamily. EngA (Der) GTPase family. Associates with the 50S ribosomal subunit.

In terms of biological role, GTPase that plays an essential role in the late steps of ribosome biogenesis. The sequence is that of GTPase Der from Streptococcus pyogenes serotype M5 (strain Manfredo).